Consider the following 93-residue polypeptide: MQIDDALLQRLEKLSMLEIKDEHKESVKGHLAEILGFVENIFALETSALKTDTELCTPLREDEPKSQPNTAKEILSQNKHSQDHYFVVPKIIE.

It belongs to the GatC family. Heterotrimer of A, B and C subunits.

The catalysed reaction is L-glutamyl-tRNA(Gln) + L-glutamine + ATP + H2O = L-glutaminyl-tRNA(Gln) + L-glutamate + ADP + phosphate + H(+). It carries out the reaction L-aspartyl-tRNA(Asn) + L-glutamine + ATP + H2O = L-asparaginyl-tRNA(Asn) + L-glutamate + ADP + phosphate + 2 H(+). In terms of biological role, allows the formation of correctly charged Asn-tRNA(Asn) or Gln-tRNA(Gln) through the transamidation of misacylated Asp-tRNA(Asn) or Glu-tRNA(Gln) in organisms which lack either or both of asparaginyl-tRNA or glutaminyl-tRNA synthetases. The reaction takes place in the presence of glutamine and ATP through an activated phospho-Asp-tRNA(Asn) or phospho-Glu-tRNA(Gln). This is Aspartyl/glutamyl-tRNA(Asn/Gln) amidotransferase subunit C from Helicobacter pylori (strain HPAG1).